Here is a 163-residue protein sequence, read N- to C-terminus: Cyclic pyranopterin monophosphate synthase (163 aa).

Substrate contacts are provided by residues 75–77 and 113–114; these read LCH and ME. Residue aspartate 128 is part of the active site.

This sequence belongs to the MoaC family. As to quaternary structure, homohexamer; trimer of dimers.

The enzyme catalyses (8S)-3',8-cyclo-7,8-dihydroguanosine 5'-triphosphate = cyclic pyranopterin phosphate + diphosphate. It functions in the pathway cofactor biosynthesis; molybdopterin biosynthesis. Its function is as follows. Catalyzes the conversion of (8S)-3',8-cyclo-7,8-dihydroguanosine 5'-triphosphate to cyclic pyranopterin monophosphate (cPMP). This Magnetococcus marinus (strain ATCC BAA-1437 / JCM 17883 / MC-1) protein is Cyclic pyranopterin monophosphate synthase.